The following is a 391-amino-acid chain: Phosphoglycerate kinase (391 aa).

Substrate contacts are provided by residues 21 to 23, R36, 59 to 62, R113, and R146; these read DFN and HLGR. Residues K197, E319, and 345–348 contribute to the ATP site; that span reads GGDT.

Belongs to the phosphoglycerate kinase family. As to quaternary structure, monomer.

The protein localises to the cytoplasm. The enzyme catalyses (2R)-3-phosphoglycerate + ATP = (2R)-3-phospho-glyceroyl phosphate + ADP. The protein operates within carbohydrate degradation; glycolysis; pyruvate from D-glyceraldehyde 3-phosphate: step 2/5. The chain is Phosphoglycerate kinase from Methylococcus capsulatus (strain ATCC 33009 / NCIMB 11132 / Bath).